The primary structure comprises 403 residues: Tryptophan synthase beta chain (403 aa).

Lys-93 carries the N6-(pyridoxal phosphate)lysine modification.

This sequence belongs to the TrpB family. In terms of assembly, tetramer of two alpha and two beta chains. The cofactor is pyridoxal 5'-phosphate.

The catalysed reaction is (1S,2R)-1-C-(indol-3-yl)glycerol 3-phosphate + L-serine = D-glyceraldehyde 3-phosphate + L-tryptophan + H2O. It participates in amino-acid biosynthesis; L-tryptophan biosynthesis; L-tryptophan from chorismate: step 5/5. In terms of biological role, the beta subunit is responsible for the synthesis of L-tryptophan from indole and L-serine. This is Tryptophan synthase beta chain from Acinetobacter baylyi (strain ATCC 33305 / BD413 / ADP1).